A 114-amino-acid chain; its full sequence is Small ribosomal subunit protein eS25 (114 aa).

Residues 1 to 33 are disordered; the sequence is MAPKKDKAPPPSSKPAKSGGKQKKKKWSKGKQK. The segment covering 20 to 30 has biased composition (basic residues); the sequence is GKQKKKKWSKG.

It belongs to the eukaryotic ribosomal protein eS25 family.

In Amaranthus cruentus (Purple amaranth), this protein is Small ribosomal subunit protein eS25 (RPS25).